The sequence spans 695 residues: MSSFKGNQAQKRRLSVFPKGPLEIPSPTEADWPKDDEKDFVFKDLDQELDSLPQPYRMINKLVDHLFNRSWEIIEERDSLREVEKNWIVPAIYHPVAEIQLDKMPGGMAVSHDYLFIGGLKGFSIYNLHNCKRIYVLEKFKADVISIWATDLGNDVLIVPIDEMGIVRLFYLCKDSLYHIKAINEVDDSSKQSTCLKMEISQNGDFAAFLFQGAGDVWLEVYKLPKEIWLKEMEHPQSTLNQKKKAKQLQLSTPDSAVTESIETSSGPSVSSNSVQDLNISFKSDLKLSLPVFVMKIKPPKPIAGTTFKSPLEVFAKVEDYVGLGSGQNHFIKDVQWEQHMETFYASYKKHLEGEWEEEPLSMATFHFFYTNSLTTMSMDVKSSSGIACVLGIHWNGRHNLFFYSLNKTQKDKTEYENVWPCAAPIVMSQISSFSSYLALVCEDGVLILWDLAEGFLFGVVALPEGCFCQSIHFLRFFLVHEGQNVYPDYPVKFEVMCVVLCTDASLHLVTASGTQGPTSKVLVGRPVMHMEEAICAVAPVPALPGMVLIFSRSQSVTLMDVAKAEVLCAFSAPTCHPQALPWKPLFAVSPHHPYFLLHGAHPHGQTTSTEDPKKSTDSVFYFNFEDYLLLKDISKKCTISQMAVNFSQMLPVEKRCEQVFQKSIQMTKTQMKGREQWSRLRKYSIMLQKELLKR.

The interval 1 to 35 (MSSFKGNQAQKRRLSVFPKGPLEIPSPTEADWPKD) is disordered. The WD repeat unit spans residues 421 to 460 (PCAAPIVMSQISSFSSYLALVCEDGVLILWDLAEGFLFGV).

As to expression, testis-specific. Expressed in spermatogonia, spermatocytes and spermatids.

The protein is WD repeat-containing protein 93 (Wdr93) of Mus musculus (Mouse).